The sequence spans 1222 residues: Protein SCP160 (1222 aa).

Residues 1–12 (MSEEQTAIDSPP) show a composition bias toward polar residues. A disordered region spans residues 1-59 (MSEEQTAIDSPPSTVEGSVETVTTIDSPSTTASTIAATAEEHPQLEKKPTPLPSLKDLP). Residues 13 to 38 (STVEGSVETVTTIDSPSTTASTIAAT) are compositionally biased toward low complexity. Residues 39–49 (AEEHPQLEKKP) show a composition bias toward basic and acidic residues. Position 50 is a phosphothreonine (T50). S54, S63, S85, S87, and S89 each carry phosphoserine. The segment at 79–98 (KPAVSNSPSPSPSAPSLTTG) is disordered. Residues 177-249 (PINAVIEVPS…ESVNLAKAKI (73 aa)) enclose the KH 1 domain. S630 carries the post-translational modification Phosphoserine. KH domains are found at residues 634-702 (KSKM…KKYL), 712-771 (IITK…HEEL), 782-851 (GHKM…AKRV), 861-929 (FVTE…VEEI), and 939-1001 (SVTK…EKKI). At S1112 the chain carries Phosphoserine. Residues 1153–1216 (YAGYVWGADT…AGVEKAGEMV (64 aa)) form the KH 7 domain.

The protein localises to the endoplasmic reticulum membrane. It is found in the nucleus membrane. Involved in the control of mitotic chromosome transmission. Required during cell division for faithful partitioning of the ER-nuclear envelope membranes which, in S.cerevisiae, enclose the duplicated chromosomes. This is Protein SCP160 (SCP160) from Saccharomyces cerevisiae (strain ATCC 204508 / S288c) (Baker's yeast).